The primary structure comprises 175 residues: Sec-independent protein translocase protein TatB (175 aa).

A helical membrane pass occupies residues 1–21 (MLDLGLSKMALIGVVALVVLG). Disordered stretches follow at residues 96 to 115 (VSPG…AASG) and 153 to 175 (VQSG…ARFL). Over residues 160–175 (VARHRPASLRRPARFL) the composition is skewed to basic residues.

The protein belongs to the TatB family. In terms of assembly, the Tat system comprises two distinct complexes: a TatABC complex, containing multiple copies of TatA, TatB and TatC subunits, and a separate TatA complex, containing only TatA subunits. Substrates initially bind to the TatABC complex, which probably triggers association of the separate TatA complex to form the active translocon.

The protein resides in the cell inner membrane. Functionally, part of the twin-arginine translocation (Tat) system that transports large folded proteins containing a characteristic twin-arginine motif in their signal peptide across membranes. Together with TatC, TatB is part of a receptor directly interacting with Tat signal peptides. TatB may form an oligomeric binding site that transiently accommodates folded Tat precursor proteins before their translocation. This chain is Sec-independent protein translocase protein TatB, found in Burkholderia mallei (strain ATCC 23344).